A 95-amino-acid polypeptide reads, in one-letter code: Large ribosomal subunit protein bL25 (95 aa).

It belongs to the bacterial ribosomal protein bL25 family. As to quaternary structure, part of the 50S ribosomal subunit; part of the 5S rRNA/L5/L18/L25 subcomplex. Contacts the 5S rRNA. Binds to the 5S rRNA independently of L5 and L18.

In terms of biological role, this is one of the proteins that binds to the 5S RNA in the ribosome where it forms part of the central protuberance. The sequence is that of Large ribosomal subunit protein bL25 from Shewanella woodyi (strain ATCC 51908 / MS32).